We begin with the raw amino-acid sequence, 533 residues long: Probable G-protein coupled receptor Mth-like 14 (533 aa).

The N-terminal stretch at 1–23 (MNLGHWNFLLALISLQTFFNASA) is a signal peptide. Residues Asn-20, Asn-29, Asn-30, Asn-36, and Asn-47 are each glycosylated (N-linked (GlcNAc...) asparagine). Residues 24–242 (QISTVNNSSK…QVEEQIAFAK (219 aa)) lie on the Extracellular side of the membrane. The interval 86–108 (VQSPVDNPLDPADCSQREKYRKQ) is disordered. An intrachain disulfide couples Cys-120 to Cys-216. N-linked (GlcNAc...) asparagine glycans are attached at residues Asn-133, Asn-178, and Asn-206. Residues 243 to 263 (VVFVAVLMLISMPCLLLVSYL) form a helical membrane-spanning segment. At 264–279 (HMTLRLLRNLHGLSLS) the chain is on the cytoplasmic side. Residues 280-300 (LMSLCLASGYFVHSVVHIYGI) form a helical membrane-spanning segment. Residues 301–303 (PNQ) lie on the Extracellular side of the membrane. A helical transmembrane segment spans residues 304–324 (GFIGYVIQFCILSYFFWYLCI). The Cytoplasmic portion of the chain corresponds to 325 to 347 (CFNVLLNVWYKLPCCIQCSKSWA). Residues 348-368 (TFNFACYAVFAFSGPATIVAL) form a helical membrane-spanning segment. Topologically, residues 369-395 (TVQKGLPGMPSYFLQGLTESIRDSQRY) are extracellular. A helical transmembrane segment spans residues 396–416 (FIPPVSTILFLSFLLNIISFF). Topologically, residues 417–451 (GFQRISGYAKAEKNIQERKCLFDQQKYEDVKKDAK) are cytoplasmic. Residues 452-472 (CVSLLGIIMVVSWLLEIITFY) traverse the membrane as a helical segment. Over 473 to 480 (SGSNSNYL) the chain is Extracellular. A helical membrane pass occupies residues 481-501 (ILCDMVNGLQGVWVLLIFLVV). At 502–533 (RRRRTIILRWWYDRGSHEIEGTELQALSNSPT) the chain is on the cytoplasmic side.

It belongs to the G-protein coupled receptor 2 family. Mth subfamily.

It is found in the cell membrane. This chain is Probable G-protein coupled receptor Mth-like 14 (mthl14), found in Drosophila melanogaster (Fruit fly).